Here is a 1499-residue protein sequence, read N- to C-terminus: Rho GTPase-activating protein 35 (1499 aa).

The interval 1–266 (MMMARKQDVR…IPYFEALKQQ (266 aa)) is has GTPase activity, required for proper localization. GTP-binding positions include Lys28, 33–37 (IGKSC), Leu52, Ser56, 95–97 (EQT), 201–203 (KCD), and 229–231 (SAR). 4 consecutive FF domains span residues 270–327 (IATA…HIHR), 368–422 (KLLE…HLEK), 429–483 (RAEM…HQKQ), and 485–550 (IDRA…HIHF). Tyr308 bears the Phosphotyrosine mark. Ser589 carries the post-translational modification Phosphoserine. Positions 592-767 (DLNIDRINLV…LLDSKRNLNL (176 aa)) constitute a pG1 pseudoGTPase domain. Residues Ser770 and Ser773 each carry the phosphoserine modification. Positions 783–947 (RIVMCLMCGD…FKDVVEKKNI (165 aa)) constitute a pG2 pseudoGTPase domain. Phosphoserine occurs at positions 970, 975, 985, and 1072. At Tyr1087 the chain carries Phosphotyrosine. Phosphotyrosine; by ABL2 and PTK6 is present on Tyr1105. Positions 1124–1141 (KAQSNGSGNGSDSEMDTS) are enriched in polar residues. Residues 1124–1148 (KAQSNGSGNGSDSEMDTSSLERGRK) form a disordered region. A phosphoserine mark is found at Ser1134, Ser1142, Ser1150, Ser1176, Ser1179, and Ser1221. Residues 1177-1207 (VGSDDELGPIRKKEEDQASQGYKGDNAVIPY) are disordered. Positions 1213–1236 (PRRRNILRSLRRNTKKPKPKPRPS) are required for phospholipid binding and regulation of the substrate preference. Thr1226 carries the phosphothreonine modification. Ser1236 bears the Phosphoserine mark. The Rho-GAP domain occupies 1249 to 1436 (VPLTTVVTPE…LFIQQCPFFF (188 aa)). The interval 1446–1499 (GAAPGSPSAMAPTVPFLTSTPATSQPSPPQSPPPTPQSPMQPLLSSQLQAEHTL) is disordered. Low complexity predominate over residues 1448–1470 (APGSPSAMAPTVPFLTSTPATSQ). Positions 1471–1484 (PSPPQSPPPTPQSP) are enriched in pro residues. Residues Ser1472 and Ser1476 each carry the phosphoserine modification. The residue at position 1480 (Thr1480) is a Phosphothreonine. Ser1483 bears the Phosphoserine mark. Residues 1485 to 1499 (MQPLLSSQLQAEHTL) show a composition bias toward low complexity.

In terms of assembly, interacts with the general transcription factor GTF2I, the interaction sequesters GTF2I in the cytoplasm. Interacts with RASA1. In terms of processing, phosphorylation of Tyr-1105 by PTK6 promotes the association with RASA1, inactivating RHOA while activating RAS. Phosphorylation at Tyr-308 by PDGFRA inhibits binding to GTF2I. Phosphorylated by PRKCA at Ser-1221 and Thr-1226, induces relocalization from the cytoplasm to regions of plasma membrane ruffling and prevents the binding and substrate specificity regulation by phospholipids. In brain, phosphorylated by FYN and SRC. During focal adhesion formation, phosphorylated by MAPK1 and MAPK3 at the C-terminal region, probably at Ser-1451, Ser-1476, Thr-1480 and Ser-1483. Phosphorylation by MAPK1 and MAPK3 inhibits GAP function and localizes ARGHAP35 away from newly forming focal adhesions and stress fibers in cells spreading on fibronectin. Phosphorylation at Ser-1476 and Thr-1480 by GSK3B requires priming by MAPK and inhibits RhoGAP activity and modulates polarized cell migration. Expressed in the developing kidneys. Expressed in all regions of the mature nervous system (at protein level). Detected in neutrophils (at protein level).

It localises to the cytoplasm. The protein resides in the cytoskeleton. Its subcellular location is the cilium basal body. The protein localises to the nucleus. It is found in the cell membrane. Its function is as follows. Rho GTPase-activating protein (GAP). Binds several acidic phospholipids which inhibits the Rho GAP activity to promote the Rac GAP activity. This binding is inhibited by phosphorylation by PRKCA. Involved in cell differentiation as well as cell adhesion and migration, plays an important role in retinal tissue morphogenesis, neural tube fusion, midline fusion of the cerebral hemispheres and mammary gland branching morphogenesis. Transduces signals from p21-ras to the nucleus, acting via the ras GTPase-activating protein (GAP). Transduces SRC-dependent signals from cell-surface adhesion molecules, such as laminin, to promote neurite outgrowth. Regulates axon outgrowth, guidance and fasciculation. Modulates Rho GTPase-dependent F-actin polymerization, organization and assembly, is involved in polarized cell migration and in the positive regulation of ciliogenesis and cilia elongation. During mammary gland development, is required in both the epithelial and stromal compartments for ductal outgrowth. Represses transcription of the glucocorticoid receptor by binding to the cis-acting regulatory sequence 5'-GAGAAAAGAAACTGGAGAAACTC-3'; this function is however unclear and would need additional experimental evidences. The chain is Rho GTPase-activating protein 35 from Mus musculus (Mouse).